A 428-amino-acid polypeptide reads, in one-letter code: Isocitrate lyase 1 (428 aa).

Position 91–93 (serine 91–tryptophan 93) interacts with substrate. Aspartate 153 serves as a coordination point for Mg(2+). The active-site Proton acceptor is cysteine 191. Substrate-binding positions include glycine 192 to histidine 193, arginine 228, asparagine 313 to serine 317, and threonine 347.

The protein belongs to the isocitrate lyase/PEP mutase superfamily. Isocitrate lyase family. Homotetramer. Mg(2+) serves as cofactor.

The catalysed reaction is D-threo-isocitrate = glyoxylate + succinate. The enzyme catalyses (2S,3R)-3-hydroxybutane-1,2,3-tricarboxylate = pyruvate + succinate. It functions in the pathway carbohydrate metabolism; glyoxylate cycle; (S)-malate from isocitrate: step 1/2. Involved in the persistence and virulence of M.tuberculosis. Catalyzes the reversible formation of succinate and glyoxylate from isocitrate, a key step of the glyoxylate cycle, which operates as an anaplerotic route for replenishing the tricarboxylic acid cycle during growth on fatty acid substrates. It also catalyzes the formation of pyruvate and succinate from 2-methylisocitrate, a key step in the methylcitrate cycle (propionate degradation route). In Mycobacterium tuberculosis (strain ATCC 35801 / TMC 107 / Erdman), this protein is Isocitrate lyase 1 (icl1).